The sequence spans 780 residues: MTNSEPRRMTCDSEVVWKKLQDGLDVAYRRENMAPKDYMTLYTSVYDYCTSITLSTSRRDGEDGRAESSTPARTAGADFVGHEMYQRVEEYVKAYVIAVCEKGAELSGEDLLKYYTTEWENFRISSKVMDGIFAYLNRHWIRRELDEGHENIYMVYTLALVVWKRNLFNDLKDKVIDAMLELIRSERTGSMINSRYISGVVECLVELGVDDSETDAKKDAETKKLAVYKEFFEVKFLEATRGFYTQEAANFLSNGGNVTDYMIKVETRLNQEDDRCQLYLNSSTKTPLATCCESVLISNQLDFLQRHFGGLLVDKRDDDLSRMFKLCDRVPNGLDELRKSLENHIAKEGHQALERVAMEAATDAKLYVKTLLEVHERYQSLVNRSFKNEPGFMQSLDKAATSFINNNAVTKRAPPQAQLTKSAELLARYCDQLLRKSSKMPDEAELEELQTKIMVVFKYIDDKDVFSKFYTKMFSKRLISELSASDEAEANFITKLKSMCGYEYTARLSKMVNDTQVSKDLTADFKEKKADMLGQKSVEFNVLVLSSGSWPTFPTTPITLPQQLSKTIEIFGQFYNEKFNGRRLTWVYSQSRGEITSTAFPKKYVFTATTAQMCTMLLFNEQDSYTVEQIAAATKMDEKSAPAIVGSLIKNLVLKADTELQKEDEVPMTATVSLNKAYMNKKVRVDLSKFTMKQDAVRDTENVQKNVEEDRKSVISACIVRIMKTRKRVQHQQLMTEVITQLSGRFKPKVEMIKRCIGSLIEKEYMLRTEGQKDLYEYLA.

In terms of domain architecture, Cullin neddylation spans 710-771 (DRKSVISACI…EKEYMLRTEG (62 aa)). Lysine 724 is covalently cross-linked (Glycyl lysine isopeptide (Lys-Gly) (interchain with G-Cter in NEDD8)).

It belongs to the cullin family. As to quaternary structure, component of an SCF (SKP1-CUL1-F-box protein) E3 ubiquitin ligase complex composed of cul-1, fsn-1, rpm-1 and skr-1. Interacts with Skp1-related proteins skr-1, skr-2, skr-3, skr-4, skr-7, skr-8, skr-9 and skr-10. Neddylated; which enhances the ubiquitination activity of SCF. In terms of tissue distribution, ubiquitous.

The protein localises to the cytoplasm. The protein operates within protein modification; protein ubiquitination. In terms of biological role, probable core component of multiple cullin-RING-based SCF (SKP1-CUL1-F-box) E3 ubiquitin-protein ligase complexes which mediate the ubiquitination and subsequent proteasomal degradation of target proteins. As a scaffold protein may contribute to catalysis through positioning of the substrate and the ubiquitin-conjugating enzyme. Required for developmentally programmed transitions from the G1 phase of the cell cycle to the G0 phase or the apoptotic pathway. The sequence is that of Cullin-1 (cul-1) from Caenorhabditis elegans.